Here is a 119-residue protein sequence, read N- to C-terminus: Protein yippee-like 3 (119 aa).

One can recognise a Yippee domain in the interval Arg-19–Asn-116. The Zn(2+) site is built by Cys-23, Cys-26, Cys-79, and Cys-82.

Belongs to the yippee family.

It localises to the nucleus. The protein localises to the nucleolus. Functionally, may be involved in proliferation and apoptosis in myeloid precursor cells. The chain is Protein yippee-like 3 (ypel3) from Danio rerio (Zebrafish).